An 80-amino-acid chain; its full sequence is U6 snRNA-associated Sm-like protein LSm6 (80 aa).

In terms of domain architecture, Sm spans T7–R79. K59 carries the N6-acetyllysine modification.

This sequence belongs to the snRNP Sm proteins family. SmF/LSm6 subfamily. As to quaternary structure, component of the precatalytic spliceosome (spliceosome B complex). Component of the U4/U6-U5 tri-snRNP complex, a building block of the precatalytic spliceosome (spliceosome B complex). The U4/U6-U5 tri-snRNP complex is composed of the U4, U6 and U5 snRNAs and at least PRPF3, PRPF4, PRPF6, PRPF8, PRPF31, SNRNP200, TXNL4A, SNRNP40, SNRPB, SNRPD1, SNRPD2, SNRPD3, SNRPE, SNRPF, SNRPG, DDX23, CD2BP2, PPIH, SNU13, EFTUD2, SART1 and USP39, plus LSM2, LSM3, LSM4, LSM5, LSM6, LSM7 and LSM8. LSM2, LSM3, LSM4, LSM5, LSM6, LSM7 and LSM8 form a heptameric, ring-shaped subcomplex (the LSM2-8 complex) that is part of the U4/U6-U5 tri-snRNP complex and the precatalytic spliceosome. Component of the heptameric LSM1-LSM7 complex, which consists of LSM1, LSM2, LSM3, LSM4, LSM5, LSM6 and LSM7.

The protein localises to the cytoplasm. It is found in the nucleus. Functionally, plays a role in pre-mRNA splicing as component of the U4/U6-U5 tri-snRNP complex that is involved in spliceosome assembly, and as component of the precatalytic spliceosome (spliceosome B complex). The heptameric LSM2-8 complex binds specifically to the 3'-terminal U-tract of U6 snRNA. Component of LSm protein complexes, which are involved in RNA processing and may function in a chaperone-like manner, facilitating the efficient association of RNA processing factors with their substrates. Component of the cytoplasmic LSM1-LSM7 complex, which is thought to be involved in mRNA degradation by activating the decapping step in the 5'-to-3' mRNA decay pathway. In Homo sapiens (Human), this protein is U6 snRNA-associated Sm-like protein LSm6 (LSM6).